We begin with the raw amino-acid sequence, 666 residues long: Chaperone protein HtpG (666 aa).

The interval 1-374 is a; substrate-binding; it reads MSELNPVDNQ…SADLPLNVSR (374 aa). A b region spans residues 375-593; that stretch reads ELLQESRDVK…EGELSPQMIQ (219 aa). Residues 594 to 666 are c; sequence MLKQMGQDVP…LRRVNELLMR (73 aa).

This sequence belongs to the heat shock protein 90 family. Homodimer.

The protein resides in the cytoplasm. Its function is as follows. Molecular chaperone. Has ATPase activity. The polypeptide is Chaperone protein HtpG (Psychrobacter cryohalolentis (strain ATCC BAA-1226 / DSM 17306 / VKM B-2378 / K5)).